A 37-amino-acid polypeptide reads, in one-letter code: Large ribosomal subunit protein bL36c (37 aa).

It belongs to the bacterial ribosomal protein bL36 family.

It is found in the plastid. The protein localises to the chloroplast. This Huperzia lucidula (Shining clubmoss) protein is Large ribosomal subunit protein bL36c.